Consider the following 311-residue polypeptide: tRNA dimethylallyltransferase (311 aa).

ATP is bound at residue 12–19; the sequence is GPTASGKT. 14–19 contacts substrate; it reads TASGKT. Interaction with substrate tRNA stretches follow at residues 37 to 40 and 161 to 165; these read DSAM and QRIQR.

Belongs to the IPP transferase family. As to quaternary structure, monomer. Mg(2+) is required as a cofactor.

The catalysed reaction is adenosine(37) in tRNA + dimethylallyl diphosphate = N(6)-dimethylallyladenosine(37) in tRNA + diphosphate. Functionally, catalyzes the transfer of a dimethylallyl group onto the adenine at position 37 in tRNAs that read codons beginning with uridine, leading to the formation of N6-(dimethylallyl)adenosine (i(6)A). This is tRNA dimethylallyltransferase from Coxiella burnetii (strain RSA 331 / Henzerling II).